Reading from the N-terminus, the 103-residue chain is ESAT-6-like protein EsxF (103 aa).

This sequence belongs to the WXG100 family. CFP-10 subfamily.

The protein localises to the secreted. The sequence is that of ESAT-6-like protein EsxF from Mycobacterium tuberculosis (strain CDC 1551 / Oshkosh).